Here is a 397-residue protein sequence, read N- to C-terminus: Riboflavin biosynthesis protein RibBA (397 aa).

The tract at residues 1–199 (MFHRIEEALE…IEDLIAYRRH (199 aa)) is DHBP synthase. Residues 26 to 27 (RE), Asp31, 138 to 142 (RAGHT), and Glu162 each bind D-ribulose 5-phosphate. Glu27 provides a ligand contact to Mg(2+). His141 serves as a coordination point for Mg(2+). The interval 200 to 397 (HETLVTREVE…ASKLGHLLNL (198 aa)) is GTP cyclohydrolase II. 250-254 (RVHSE) is a binding site for GTP. 3 residues coordinate Zn(2+): Cys255, Cys266, and Cys268. GTP is bound by residues Gln271, 293 to 295 (EGR), and Thr315. Asp327 functions as the Proton acceptor; for GTP cyclohydrolase activity in the catalytic mechanism. Arg329 acts as the Nucleophile; for GTP cyclohydrolase activity in catalysis. Positions 350 and 355 each coordinate GTP.

The protein in the N-terminal section; belongs to the DHBP synthase family. In the C-terminal section; belongs to the GTP cyclohydrolase II family. Mg(2+) serves as cofactor. Requires Mn(2+) as cofactor. It depends on Zn(2+) as a cofactor.

It catalyses the reaction D-ribulose 5-phosphate = (2S)-2-hydroxy-3-oxobutyl phosphate + formate + H(+). The catalysed reaction is GTP + 4 H2O = 2,5-diamino-6-hydroxy-4-(5-phosphoribosylamino)-pyrimidine + formate + 2 phosphate + 3 H(+). Its pathway is cofactor biosynthesis; riboflavin biosynthesis; 2-hydroxy-3-oxobutyl phosphate from D-ribulose 5-phosphate: step 1/1. It functions in the pathway cofactor biosynthesis; riboflavin biosynthesis; 5-amino-6-(D-ribitylamino)uracil from GTP: step 1/4. Functionally, catalyzes the conversion of D-ribulose 5-phosphate to formate and 3,4-dihydroxy-2-butanone 4-phosphate. In terms of biological role, catalyzes the conversion of GTP to 2,5-diamino-6-ribosylamino-4(3H)-pyrimidinone 5'-phosphate (DARP), formate and pyrophosphate. The sequence is that of Riboflavin biosynthesis protein RibBA from Bacillus mycoides (strain KBAB4) (Bacillus weihenstephanensis).